The primary structure comprises 852 residues: Patatin-like phospholipase domain-containing protein CaO19.1504 (852 aa).

Residues 41–52 show a composition bias toward low complexity; it reads ATTDITTTPIND. A disordered region spans residues 41 to 184; the sequence is ATTDITTTPI…KKTTPTSSTS (144 aa). The span at 75–95 shows a compositional bias: polar residues; that stretch reads INGTVSDSSSITDEDIMNSSY. The span at 101-110 shows a compositional bias: low complexity; it reads SSTNLKSNST. Over residues 113–122 the composition is skewed to acidic residues; it reads DDDDDDDDDD. 2 stretches are compositionally biased toward low complexity: residues 129 to 142 and 158 to 171; these read SGTT…SLSS and GGSR…KGSS. A helical membrane pass occupies residues 207-227; it reads WPILIFVFSWIGILGIFYFMI. Residues 396–588 form the PNPLA domain; it reads LCLSGGACFA…RTDIPIEALN (193 aa). Positions 427–431 match the GXSXG motif; the sequence is GTSGG. The Nucleophile role is filled by Ser429. Asp575 serves as the catalytic Proton acceptor. The disordered stretch occupies residues 800-840; the sequence is KKLLDELDNEDEEEDEEEEEVDVDDDDDDDDDSLSDSFEIT. Positions 805 to 833 are enriched in acidic residues; sequence ELDNEDEEEDEEEEEVDVDDDDDDDDDSL.

Belongs to the PLPL family.

The protein resides in the membrane. Probable lipid hydrolase. The chain is Patatin-like phospholipase domain-containing protein CaO19.1504 from Candida albicans (strain SC5314 / ATCC MYA-2876) (Yeast).